Here is a 353-residue protein sequence, read N- to C-terminus: Rhodopsin (353 aa).

Residues 1–36 (MNGTEGDNFYVPFSNKTGLARSPYEYPQYYLAEPWK) lie on the Extracellular side of the membrane. 2 N-linked (GlcNAc...) asparagine glycosylation sites follow: Asn-2 and Asn-15. A helical membrane pass occupies residues 37–61 (YSALAAYMFFLILVGFPVNFLTLFV). Residues 62–73 (TVQHKKLRTPLN) lie on the Cytoplasmic side of the membrane. A helical membrane pass occupies residues 74–96 (YILLNLAMANLFMVLFGFTVTMY). At 97–110 (TSMNGYFVFGPTMC) the chain is on the extracellular side. A disulfide bond links Cys-110 and Cys-187. A helical membrane pass occupies residues 111–133 (SIEGFFATLGGEVALWSLVVLAI). Positions 134–136 (ERY) match the 'Ionic lock' involved in activated form stabilization motif. Residues 134–152 (ERYIVICKPMGNFRFGNTH) are Cytoplasmic-facing. Residues 153–173 (AIMGVAFTWIMALACAAPPLV) form a helical membrane-spanning segment. The Extracellular segment spans residues 174-202 (GWSRYIPEGMQCSCGPDYYTLNPNFNNES). Residues 203-224 (YVVYMFVVHFLVPFVIIFFCYG) traverse the membrane as a helical segment. Residues 225–252 (RLLCTVKEAAAAQQESASTQKAEKEVTR) are Cytoplasmic-facing. A helical membrane pass occupies residues 253 to 274 (MVVLMVIGFLVCWVPYASVAFY). The Extracellular segment spans residues 275–286 (IFTHQGSDFGAT). A helical transmembrane segment spans residues 287-308 (FMTLPAFFAKSSALYNPVIYIL). Position 296 is an N6-(retinylidene)lysine (Lys-296). The Cytoplasmic portion of the chain corresponds to 309-353 (MNKQFRNCMITTLCCGKNPLGDDESGASTSKTEVSSVSTSPVSPA). The segment at 330-353 (DDESGASTSKTEVSSVSTSPVSPA) is disordered. The span at 336-353 (STSKTEVSSVSTSPVSPA) shows a compositional bias: low complexity.

This sequence belongs to the G-protein coupled receptor 1 family. Opsin subfamily. In terms of processing, phosphorylated on some or all of the serine and threonine residues present in the C-terminal region. Post-translationally, contains one covalently linked retinal chromophore. In terms of tissue distribution, short photoreceptor cells.

It localises to the membrane. The protein resides in the cell projection. It is found in the cilium. Its subcellular location is the photoreceptor outer segment. Functionally, photoreceptor required for image-forming vision at low light intensity. While most salt water fish species use retinal as chromophore, most freshwater fish use 3-dehydroretinal, or a mixture of retinal and 3-dehydroretinal. Light-induced isomerization of 11-cis to all-trans retinal triggers a conformational change that activates signaling via G-proteins. Subsequent receptor phosphorylation mediates displacement of the bound G-protein alpha subunit by arrestin and terminates signaling. In Lethenteron camtschaticum (Japanese lamprey), this protein is Rhodopsin (RHO).